Consider the following 148-residue polypeptide: MGRFIFVSFGLLVMFLSLSGTEAGVCCPFGWSGYDQNCYKAFEELMTWADAEKFCTQQHKGSHLLSLHNIAEADFVVKTTVSGSKDGVIWMGLSDVWNECNWGWTDGAQLDYKAWNVASNCFIFKTAENNWSRTDCSGTHNFVCKSPA.

A signal peptide spans 1–23 (MGRFIFVSFGLLVMFLSLSGTEA). Cystine bridges form between Cys27–Cys38, Cys55–Cys144, and Cys121–Cys136. The 112-residue stretch at 34–145 (YDQNCYKAFE…CSGTHNFVCK (112 aa)) folds into the C-type lectin domain. Asn130 carries an N-linked (GlcNAc...) asparagine glycan.

Belongs to the snaclec family. In terms of assembly, heterodimer; disulfide-linked. As to expression, expressed by the venom gland.

The protein resides in the secreted. In terms of biological role, interferes with one step of hemostasis (modulation of platelet aggregation, or coagulation cascade, for example). In Bitis arietans (African puff adder), this protein is Snaclec 6.